A 665-amino-acid chain; its full sequence is F-box/WD repeat-containing protein lin-23 (665 aa).

Positions 81-127 constitute an F-box domain; that stretch reads RDFISNLPAHLVELILFNVNSDSLKSCEEVSTSWRCALARGQHWKKL. WD repeat units lie at residues 220-257, 260-299, 301-337, 343-380, 383-420, 423-460, and 472-509; these read ENSK…CSRI, GHTG…KTLI, HCEA…DITI, GHRA…FVRT, GHRR…CLRV, GHEE…DPRA, and QHTG…PSGL. Positions 574–665 are disordered; it reads AAAEAARGAG…VDEEMPDGGP (92 aa). Acidic residues-rich tracts occupy residues 584-595 and 655-665; these read DNDESSSEEDLD and DVDEEMPDGGP.

In terms of assembly, part of a SCF (SKP1-cullin-F-box) protein ligase complex.

The protein resides in the cytoplasm. Its function is as follows. Functions cell autonomously to negatively regulate cell cycle progression. Required to restrain cell proliferation in response to developmental cues. Probably recognizes and binds to some proteins and promotes their ubiquitination and degradation. The chain is F-box/WD repeat-containing protein lin-23 (lin-23) from Caenorhabditis elegans.